Here is a 320-residue protein sequence, read N- to C-terminus: Membrane protein insertase YidC 2 (320 aa).

The N-terminal stretch at 1–23 (MKNLKKKLTLTGLMTAGLLFLSG) is a signal peptide. C24 carries N-palmitoyl cysteine lipidation. C24 carries S-diacylglycerol cysteine lipidation. 5 helical membrane passes run 68-88 (YGWG…PLGL), 142-162 (MLSS…IALY), 178-198 (GIPL…LYFI), 217-237 (AMLI…PAGV), and 239-259 (LYWA…TFIM). Residues 270–320 (EFTKNPPKINNEGLKDVTPTSVQENFKEITSERNEKERKSGGRNAGKQNRK) form a disordered region. A compositionally biased stretch (basic and acidic residues) spans 294 to 309 (NFKEITSERNEKERKS).

It belongs to the OXA1/ALB3/YidC family. Type 2 subfamily.

The protein resides in the cell membrane. In terms of biological role, required for the insertion and/or proper folding and/or complex formation of integral membrane proteins into the membrane. Involved in integration of membrane proteins that insert both dependently and independently of the Sec translocase complex, as well as at least some lipoproteins. This is Membrane protein insertase YidC 2 from Lactococcus lactis subsp. lactis (strain IL1403) (Streptococcus lactis).